The chain runs to 141 residues: Nucleoside diphosphate kinase (141 aa).

Residues lysine 11, phenylalanine 59, arginine 87, threonine 93, arginine 104, and asparagine 114 each contribute to the ATP site. Catalysis depends on histidine 117, which acts as the Pros-phosphohistidine intermediate.

Belongs to the NDK family. Homotetramer. Mg(2+) serves as cofactor.

It is found in the cytoplasm. It catalyses the reaction a 2'-deoxyribonucleoside 5'-diphosphate + ATP = a 2'-deoxyribonucleoside 5'-triphosphate + ADP. The enzyme catalyses a ribonucleoside 5'-diphosphate + ATP = a ribonucleoside 5'-triphosphate + ADP. Functionally, major role in the synthesis of nucleoside triphosphates other than ATP. The ATP gamma phosphate is transferred to the NDP beta phosphate via a ping-pong mechanism, using a phosphorylated active-site intermediate. This is Nucleoside diphosphate kinase from Legionella pneumophila (strain Lens).